The chain runs to 427 residues: Phosphatidylserine decarboxylase proenzyme 1, mitochondrial (427 aa).

The transit peptide at 1–77 (MRSYLRFSDR…RRFVYKLDQA (77 aa)) directs the protein to the mitochondrion. Topologically, residues 78–88 (VTAALGPNGRY) are mitochondrial matrix. Residues 89 to 107 (IAMVGMTASAVLLTFHYKF) form a helical membrane-spanning segment. Residues 108-427 (REVIAATDNV…TEDERLFAFY (320 aa)) lie on the Mitochondrial intermembrane side of the membrane. Catalysis depends on charge relay system; for autoendoproteolytic cleavage activity residues aspartate 210, histidine 268, and serine 379. The active-site Schiff-base intermediate with substrate; via pyruvic acid; for decarboxylase activity is serine 379. The residue at position 379 (serine 379) is a Pyruvic acid (Ser); by autocatalysis.

It belongs to the phosphatidylserine decarboxylase family. PSD-B subfamily. Eukaryotic type I sub-subfamily. In terms of assembly, heterodimer of a large membrane-associated beta subunit and a small pyruvoyl-containing alpha subunit. It depends on pyruvate as a cofactor. In terms of processing, is synthesized initially as an inactive proenzyme. Formation of the active enzyme involves a self-maturation process in which the active site pyruvoyl group is generated from an internal serine residue via an autocatalytic post-translational modification. Two non-identical subunits are generated from the proenzyme in this reaction, and the pyruvate is formed at the N-terminus of the alpha chain, which is derived from the carboxyl end of the proenzyme. The autoendoproteolytic cleavage occurs by a canonical serine protease mechanism, in which the side chain hydroxyl group of the serine supplies its oxygen atom to form the C-terminus of the beta chain, while the remainder of the serine residue undergoes an oxidative deamination to produce ammonia and the pyruvoyl prosthetic group on the alpha chain. During this reaction, the Ser that is part of the protease active site of the proenzyme becomes the pyruvoyl prosthetic group, which constitutes an essential element of the active site of the mature decarboxylase.

It localises to the mitochondrion. Its subcellular location is the mitochondrion inner membrane. It catalyses the reaction a 1,2-diacyl-sn-glycero-3-phospho-L-serine + H(+) = a 1,2-diacyl-sn-glycero-3-phosphoethanolamine + CO2. The protein operates within phospholipid metabolism; phosphatidylethanolamine biosynthesis; phosphatidylethanolamine from CDP-diacylglycerol: step 2/2. Functionally, catalyzes the formation of phosphatidylethanolamine (PtdEtn) from phosphatidylserine (PtdSer). Plays a central role in phospholipid metabolism and in the interorganelle trafficking of phosphatidylserine. The polypeptide is Phosphatidylserine decarboxylase proenzyme 1, mitochondrial (Toxoplasma gondii (strain ATCC 50853 / GT1)).